A 245-amino-acid chain; its full sequence is uncharacterized protein (245 aa).

The signal sequence occupies residues Met-1 to Ala-18. The segment at Val-21 to Asp-66 is disordered. N-linked (GlcNAc...) asparagine glycosylation is found at Asn-189 and Asn-225.

It localises to the secreted. This is an uncharacterized protein from Arthroderma benhamiae (strain ATCC MYA-4681 / CBS 112371) (Trichophyton mentagrophytes).